Here is a 442-residue protein sequence, read N- to C-terminus: Serine--tRNA ligase (442 aa).

Residue 249 to 251 coordinates L-serine; that stretch reads TSE. Position 280–282 (280–282) interacts with ATP; the sequence is RSE. Glu303 lines the L-serine pocket. 367–370 contacts ATP; it reads EISS. Ser402 is an L-serine binding site.

This sequence belongs to the class-II aminoacyl-tRNA synthetase family. Type-1 seryl-tRNA synthetase subfamily. In terms of assembly, homodimer. The tRNA molecule binds across the dimer.

Its subcellular location is the cytoplasm. It catalyses the reaction tRNA(Ser) + L-serine + ATP = L-seryl-tRNA(Ser) + AMP + diphosphate + H(+). The enzyme catalyses tRNA(Sec) + L-serine + ATP = L-seryl-tRNA(Sec) + AMP + diphosphate + H(+). It participates in aminoacyl-tRNA biosynthesis; selenocysteinyl-tRNA(Sec) biosynthesis; L-seryl-tRNA(Sec) from L-serine and tRNA(Sec): step 1/1. In terms of biological role, catalyzes the attachment of serine to tRNA(Ser). Is also able to aminoacylate tRNA(Sec) with serine, to form the misacylated tRNA L-seryl-tRNA(Sec), which will be further converted into selenocysteinyl-tRNA(Sec). This is Serine--tRNA ligase from Acidovorax ebreus (strain TPSY) (Diaphorobacter sp. (strain TPSY)).